A 537-amino-acid chain; its full sequence is Chaperonin GroEL (537 aa).

ATP-binding positions include 29–32 (TLGP), 86–90 (DGTTT), G413, 477–479 (NAA), and D493.

Belongs to the chaperonin (HSP60) family. As to quaternary structure, forms a cylinder of 14 subunits composed of two heptameric rings stacked back-to-back. Interacts with the co-chaperonin GroES.

It localises to the cytoplasm. It catalyses the reaction ATP + H2O + a folded polypeptide = ADP + phosphate + an unfolded polypeptide.. Functionally, together with its co-chaperonin GroES, plays an essential role in assisting protein folding. The GroEL-GroES system forms a nano-cage that allows encapsulation of the non-native substrate proteins and provides a physical environment optimized to promote and accelerate protein folding. In Bifidobacterium animalis subsp. lactis (strain AD011), this protein is Chaperonin GroEL.